The sequence spans 42 residues: Photosystem II reaction center protein J (42 aa).

A helical membrane pass occupies residues leucine 12–tyrosine 32.

The protein belongs to the PsbJ family. In terms of assembly, PSII is composed of 1 copy each of membrane proteins PsbA, PsbB, PsbC, PsbD, PsbE, PsbF, PsbH, PsbI, PsbJ, PsbK, PsbL, PsbM, PsbT, PsbX, PsbY, PsbZ, Psb30/Ycf12, at least 3 peripheral proteins of the oxygen-evolving complex and a large number of cofactors. It forms dimeric complexes.

The protein resides in the plastid. Its subcellular location is the chloroplast thylakoid membrane. Functionally, one of the components of the core complex of photosystem II (PSII). PSII is a light-driven water:plastoquinone oxidoreductase that uses light energy to abstract electrons from H(2)O, generating O(2) and a proton gradient subsequently used for ATP formation. It consists of a core antenna complex that captures photons, and an electron transfer chain that converts photonic excitation into a charge separation. This chain is Photosystem II reaction center protein J, found in Nephroselmis olivacea (Green alga).